Reading from the N-terminus, the 403-residue chain is Pyruvate, phosphate dikinase regulatory protein 1, chloroplastic (403 aa).

The transit peptide at 1–86 directs the protein to the chloroplast; that stretch reads MALLSAMKLQ…NTTGPMRPIE (86 aa). A disordered region spans residues 1–108; it reads MALLSAMKLQ…DVSSSSNGVS (108 aa). 3 stretches are compositionally biased toward low complexity: residues 17 to 26, 69 to 80, and 87 to 108; these read SSNLNPNSKP, STITNGSNNTTG, and SSSR…NGVS. An ADP-binding site is contributed by 269 to 276; sequence GVSRTGKT.

It belongs to the pyruvate, phosphate/water dikinase regulatory protein family. PDRP subfamily. As to quaternary structure, interacts with PPDK1. As to expression, expressed in green tissues.

It is found in the plastid. The protein resides in the chloroplast stroma. The enzyme catalyses N(tele)-phospho-L-histidyl/L-threonyl-[pyruvate, phosphate dikinase] + ADP = N(tele)-phospho-L-histidyl/O-phospho-L-threonyl-[pyruvate, phosphate dikinase] + AMP + H(+). The catalysed reaction is N(tele)-phospho-L-histidyl/O-phospho-L-threonyl-[pyruvate, phosphate dikinase] + phosphate + H(+) = N(tele)-phospho-L-histidyl/L-threonyl-[pyruvate, phosphate dikinase] + diphosphate. With respect to regulation, regulated by light/dark exposure. Bifunctional serine/threonine kinase and phosphorylase involved in the dark/light-mediated regulation of PPDK by catalyzing its phosphorylation/dephosphorylation. Dark/light-induced changes in stromal concentrations of the competing ADP and Pi substrates govern the direction of the reaction. In the dark, phosphorylates the catalytic intermediate of PPDK (PPDK-HisP), inactivating it. Light exposure induces the phosphorolysis reaction that reactivates PPDK. Unlike the kinase function which can utilize either Thr or Ser as target, the phosphorylase function has a strict substrate requirement for threonyl phosphate. The sequence is that of Pyruvate, phosphate dikinase regulatory protein 1, chloroplastic (RP1) from Arabidopsis thaliana (Mouse-ear cress).